Here is a 460-residue protein sequence, read N- to C-terminus: GTPase Der (460 aa).

EngA-type G domains are found at residues 4–174 (PQVA…PRRE) and 184–361 (PKIA…AERS). GTP-binding positions include 10–17 (GRPNVGKS), 57–61 (DTGGL), 126–129 (NKAE), 190–197 (GRPNVGKS), 237–241 (DTAGI), and 302–305 (NKWD). In terms of domain architecture, KH-like spans 362-446 (RRIPTAELNQ…PIELVFRERE (85 aa)).

It belongs to the TRAFAC class TrmE-Era-EngA-EngB-Septin-like GTPase superfamily. EngA (Der) GTPase family. Associates with the 50S ribosomal subunit.

Functionally, GTPase that plays an essential role in the late steps of ribosome biogenesis. The chain is GTPase Der from Thermomicrobium roseum (strain ATCC 27502 / DSM 5159 / P-2).